The chain runs to 548 residues: Acetolactate synthase isozyme 2 large subunit (548 aa).

Residue glutamate 47 coordinates thiamine diphosphate. FAD contacts are provided by residues arginine 149, 251–272, and 294–313; these read HGTKAANFAVQECDLLIAVGAR and DIDPAEMNKLRQAHVALQGD. Residues 377–457 form a thiamine pyrophosphate binding region; sequence QHQMWAAQHI…LKIVLLDNQR (81 aa). Positions 428 and 455 each coordinate Mg(2+).

It belongs to the TPP enzyme family. Tetramer of two large (IlvG) and two small (IlvM) chains. FAD is required as a cofactor. Mg(2+) serves as cofactor. It depends on thiamine diphosphate as a cofactor.

The catalysed reaction is 2 pyruvate + H(+) = (2S)-2-acetolactate + CO2. It participates in amino-acid biosynthesis; L-isoleucine biosynthesis; L-isoleucine from 2-oxobutanoate: step 1/4. The protein operates within amino-acid biosynthesis; L-valine biosynthesis; L-valine from pyruvate: step 1/4. Inhibited by the herbicides chlorimuron ethyl, chlorsulfuron and imazapyr. Functionally, catalyzes the first step in the biosynthesis of branched-chain amino acids. The polypeptide is Acetolactate synthase isozyme 2 large subunit (ilvG) (Escherichia coli (strain K12)).